A 99-amino-acid polypeptide reads, in one-letter code: A-type ATP synthase subunit F (99 aa).

The protein belongs to the V-ATPase F subunit family. As to quaternary structure, has multiple subunits with at least A(3), B(3), C, D, E, F, H, I and proteolipid K(x).

The protein localises to the cell membrane. Functionally, component of the A-type ATP synthase that produces ATP from ADP in the presence of a proton gradient across the membrane. This chain is A-type ATP synthase subunit F, found in Methanococcoides burtonii (strain DSM 6242 / NBRC 107633 / OCM 468 / ACE-M).